The following is a 501-amino-acid chain: Ribose import ATP-binding protein RbsA 1 (501 aa).

ABC transporter domains are found at residues 5–241 (LQLK…VGRK) and 252–495 (APGD…VGKL). Residue 37–44 (GENGAGKS) coordinates ATP.

This sequence belongs to the ABC transporter superfamily. Ribose importer (TC 3.A.1.2.1) family. The complex is composed of an ATP-binding protein (RbsA), two transmembrane proteins (RbsC) and a solute-binding protein (RbsB).

It is found in the cell inner membrane. The catalysed reaction is D-ribose(out) + ATP + H2O = D-ribose(in) + ADP + phosphate + H(+). In terms of biological role, part of the ABC transporter complex RbsABC involved in ribose import. Responsible for energy coupling to the transport system. The protein is Ribose import ATP-binding protein RbsA 1 of Escherichia coli O157:H7.